A 232-amino-acid chain; its full sequence is Izumo sperm-egg fusion protein 4 (232 aa).

An N-terminal signal peptide occupies residues 1–15; the sequence is MALLLCLVCLTAALA. N-linked (GlcNAc...) asparagine glycans are attached at residues asparagine 24 and asparagine 219.

Belongs to the Izumo family. As to expression, detected in sperm.

The protein localises to the secreted. The chain is Izumo sperm-egg fusion protein 4 (IZUMO4) from Homo sapiens (Human).